Here is a 129-residue protein sequence, read N- to C-terminus: Flagellar assembly factor FliW (129 aa).

It belongs to the FliW family. As to quaternary structure, interacts with flagellins FlaA and FlaB but not with FlaC; recognizes glycosylated and non-glycosylated FlaA equally. Interacts with CsrA. May form a 3-way complex of flagellin, FliS and FliW simultaneously in which FliS and FliW do not directly interact.

It is found in the cytoplasm. Acts as an anti-CsrA protein, binds CsrA and prevents it from repressing translation of its target genes, one of which is flagellin. Binds to flagellin and participates in the assembly of the flagellum. Functionally, overexpression leads to increased levels of FlaA and FlaB, but levels of FlaC remain stable. Involved in post-transcriptional regulation of flagellin biosynthesis. The polypeptide is Flagellar assembly factor FliW (Campylobacter jejuni subsp. jejuni serotype O:6 (strain 81116 / NCTC 11828)).